Consider the following 155-residue polypeptide: Ribonuclease H (155 aa).

An RNase H type-1 domain is found at methionine 1–serine 142. Residues aspartate 10, glutamate 48, aspartate 70, and aspartate 134 each coordinate Mg(2+).

This sequence belongs to the RNase H family. Monomer. The cofactor is Mg(2+).

The protein resides in the cytoplasm. The catalysed reaction is Endonucleolytic cleavage to 5'-phosphomonoester.. Its function is as follows. Endonuclease that specifically degrades the RNA of RNA-DNA hybrids. The protein is Ribonuclease H of Klebsiella pneumoniae (strain 342).